We begin with the raw amino-acid sequence, 1651 residues long: A.superbus venom factor 2 (1651 aa).

The first 22 residues, 1–22 (MEGMALYLVAALLIGFPGSSHG), serve as a signal peptide directing secretion. A glycan (N-linked (GlcNAc...) asparagine) is linked at asparagine 189. Mg(2+) contacts are provided by proline 519, aspartate 542, valine 543, and aspartate 545. Intrachain disulfides connect cysteine 547-cysteine 808, cysteine 616-cysteine 651, cysteine 684-cysteine 711, cysteine 685-cysteine 718, cysteine 698-cysteine 719, cysteine 864-cysteine 1501, cysteine 1346-cysteine 1477, cysteine 1377-cysteine 1446, cysteine 1494-cysteine 1499, cysteine 1506-cysteine 1578, cysteine 1525-cysteine 1649, and cysteine 1625-cysteine 1634. Positions 657–739 (RRRRSSVLLL…QRESELFLAR (83 aa)) are excised as a propeptide. Residues 661 to 739 (SSVLLLDSKA…QRESELFLAR (79 aa)) are C3a-like domain. The Anaphylatoxin-like domain occupies 684-719 (CCEDGMHENPMGYTCEKRAKYTQEGDACKAAFLECC). The segment at 743–754 (EDEFFEEDNIIS) is factor B binding site. The propeptide occupies 992 to 1269 (HLIITPSGSG…VMVFQALAEY (278 aa)). A C3d-like domain region spans residues 992–1269 (HLIITPSGSG…VMVFQALAEY (278 aa)). Residues 1197–1259 (VLMAASTGRD…GGTYGQTQAT (63 aa)) are factor H binding site. N-linked (GlcNAc...) asparagine glycans are attached at residues asparagine 1282 and asparagine 1352. An NTR domain is found at 1506 to 1649 (CSLLNQQKKI…LSNTLTIFGC (144 aa)).

It belongs to the venom complement C3 homolog family. As to quaternary structure, heterotrimer of alpha, beta and gamma chains; disulfide-linked. Is active with factor B in the presence of factor D. Post-translationally, first processed by the removal of 4 Arg residues by furin-type protease, forming two chains, alpha and gamma/beta precursor, linked by a disulfide bond. This mature AVF is composed of three chains: alpha, gamma and beta. Expressed by the venom gland.

The protein localises to the secreted. Complement-activating protein in snake venom. It is a structural and functional analog of complement component C3b, the activated form of C3. It binds factor B (CFB), which is subsequently cleaved by factor D (CFD) to form the bimolecular complex AVF/Bb. AVF/Bb is a C3 convertase that cleaves complement component C3, but not C5 (as do CVF/Bb). This Austrelaps superbus (Lowland copperhead snake) protein is A.superbus venom factor 2.